A 399-amino-acid polypeptide reads, in one-letter code: Acetate kinase (399 aa).

Asparagine 7 contacts Mg(2+). Residue lysine 14 participates in ATP binding. Arginine 91 is a substrate binding site. The active-site Proton donor/acceptor is the aspartate 148. Residues 208–212 (HIGNG), 283–285 (DMR), and 331–335 (GVGEN) each bind ATP. Glutamate 385 lines the Mg(2+) pocket.

The protein belongs to the acetokinase family. Homodimer. It depends on Mg(2+) as a cofactor. Requires Mn(2+) as cofactor.

The protein resides in the cytoplasm. It carries out the reaction acetate + ATP = acetyl phosphate + ADP. Its pathway is metabolic intermediate biosynthesis; acetyl-CoA biosynthesis; acetyl-CoA from acetate: step 1/2. In terms of biological role, catalyzes the formation of acetyl phosphate from acetate and ATP. Can also catalyze the reverse reaction. In Bacteroides thetaiotaomicron (strain ATCC 29148 / DSM 2079 / JCM 5827 / CCUG 10774 / NCTC 10582 / VPI-5482 / E50), this protein is Acetate kinase.